We begin with the raw amino-acid sequence, 375 residues long: MSTAGKVIKCRAAVLWEKNKPFSIEEVEVAPPKAYEVRIKIVATGICRSDDHVVNGSIITPLPAILGHEAGGIVESIGEGVTTVKPGDKVIPLFVPQCGKCRACKHPESNLCKHGDLGRAQGTLMDGTSRFTCKGKPIHHFLGVTTFSEYTVVSEISVTKIDATSPLEKVCLIGCGFSTGYGSAVKVGKVARGSICSCVWSGRVGLSAIIGCKAAGAARIIAVDINKDKFAKAKELGATECVNPQDYDKPIYQVLQEMTDGGVDFSFEVIGRLDTMVSALMCCQESHGVSVIVGVPPNAQSLTMDPMVLLSGRSWKGAVFGGYKGKDDVPKLVADFMAKKFPLEPLITNVFPFAKINEGFDLLRAGKSIRTVLTF.

Ser2 is subject to N-acetylserine. 7 residues coordinate Zn(2+): Cys47, His68, Cys98, Cys101, Cys104, Cys112, and Cys175. NAD(+)-binding positions include 200-205 (WSGRVG), Asp224, and Lys229. Lys234 is subject to N6-succinyllysine. An NAD(+)-binding site is contributed by 293-295 (VGV). At Lys340 the chain carries N6-succinyllysine. Arg370 is an NAD(+) binding site.

The protein belongs to the zinc-containing alcohol dehydrogenase family. Class-I subfamily. Homodimer. Zn(2+) is required as a cofactor.

It localises to the cytoplasm. It catalyses the reaction a primary alcohol + NAD(+) = an aldehyde + NADH + H(+). The catalysed reaction is a secondary alcohol + NAD(+) = a ketone + NADH + H(+). This Geomys bursarius (Plains pocket gopher) protein is Alcohol dehydrogenase 1 (ADH1).